The sequence spans 831 residues: uncharacterized protein (831 aa).

The CID domain maps to Met1–Ala146. Disordered regions lie at residues Ser205–Ser233, Lys265–Asn354, Ile434–Ser480, and Cys572–His831. 2 stretches are compositionally biased toward low complexity: residues Asn272–Asn354 and Ile434–Asn477. Basic and acidic residues-rich tracts occupy residues Asn592 to Arg601 and Ser611 to Glu813. Positions Asn817–His831 are enriched in low complexity.

This is an uncharacterized protein from Dictyostelium discoideum (Social amoeba).